The chain runs to 163 residues: Nucleotide-binding protein Dhaf_3127 (163 aa).

It belongs to the YajQ family.

In terms of biological role, nucleotide-binding protein. The protein is Nucleotide-binding protein Dhaf_3127 of Desulfitobacterium hafniense (strain DSM 10664 / DCB-2).